A 389-amino-acid polypeptide reads, in one-letter code: Ankyrin repeat domain-containing protein 42 (389 aa).

Residues 1 to 21 are disordered; that stretch reads MPGVANSGPSTSSRETANPCS. Residues 7–19 are compositionally biased toward polar residues; that stretch reads SGPSTSSRETANP. ANK repeat units follow at residues 25 to 60, 64 to 93, 97 to 126, 130 to 159, 163 to 192, 200 to 232, 235 to 265, 269 to 298, and 302 to 332; these read VHFG…DITH, RGWT…NLTA, RGCT…DPSV, REWR…SIED, NGNL…SATQ, NGEN…DLED, TLAF…NINE, NGST…DSNI, and AGER…DIDD.

In Homo sapiens (Human), this protein is Ankyrin repeat domain-containing protein 42 (ANKRD42).